Here is a 381-residue protein sequence, read N- to C-terminus: E3 ubiquitin-protein ligase KCMF1 (381 aa).

N-acetylserine is present on S2. S2 carries the post-translational modification Phosphoserine. The segment at 4–60 (HEGVSCDACLKGNFRGRRYKCLICYDYDLCASCYESGATTTRHTTDHPMQCILTRVD) adopts a ZZ-type zinc-finger fold. Zn(2+)-binding residues include C9, C12, C24, C27, C33, C36, H46, and H50. Residues 78–101 (FTCPYCGKMGYTETSLQEHVTSEH) form a C2H2-type zinc finger. Residues 154–194 (MFHPGRGLGGPRARRSNMHFTSSSTGGLSSSQSSYSPSSRE) are disordered. S169, S189, and S212 each carry phosphoserine. Low complexity predominate over residues 175 to 192 (SSSTGGLSSSQSSYSPSS). A coiled-coil region spans residues 224-259 (ASQLQQLQMQLQLERQHAQAARQQLETARNASRRTN). Phosphoserine is present on residues S335 and S336.

It belongs to the KCMF1 family. In terms of assembly, component of the SIFI complex, composed of KCMF1, UBR4 and calmodulin (CALM1, CALM2 or CALM3). As to expression, testis, liver, kidney, heart and skeletal muscle.

It is found in the cytoplasm. It localises to the late endosome. Its subcellular location is the lysosome. It carries out the reaction S-ubiquitinyl-[E2 ubiquitin-conjugating enzyme]-L-cysteine + [acceptor protein]-L-lysine = [E2 ubiquitin-conjugating enzyme]-L-cysteine + N(6)-ubiquitinyl-[acceptor protein]-L-lysine.. The protein operates within protein modification; protein ubiquitination. In terms of biological role, E3 ubiquitin-protein ligase which accepts ubiquitin from an E2 ubiquitin-conjugating enzyme and then transfers it to targeted substrates, promoting their degradation by the proteasome. Together with UBR4, component of the N-end rule pathway: ubiquitinates proteins bearing specific N-terminal residues that are destabilizing according to the N-end rule, leading to their degradation. Does not ubiquitinate proteins that are acetylated at the N-terminus. Together with UBR4, part of a protein quality control pathway that catalyzes ubiquitination and degradation of proteins that have been oxidized in response to reactive oxygen species (ROS): recognizes proteins with an Arg-CysO3(H) degron at the N-terminus, and mediates assembly of heterotypic 'Lys-63'-/'Lys-27'-linked branched ubiquitin chains on oxidized proteins, leading to their degradation by autophagy. Catalytic component of the SIFI complex, a multiprotein complex required to inhibit the mitochondrial stress response after a specific stress event has been resolved: ubiquitinates and degrades (1) components of the HRI-mediated signaling of the integrated stress response, such as DELE1 and EIF2AK1/HRI, as well as (2) unimported mitochondrial precursors. Within the SIFI complex, UBR4 initiates ubiquitin chain that are further elongated or branched by KCMF1. The chain is E3 ubiquitin-protein ligase KCMF1 from Mus musculus (Mouse).